Here is a 254-residue protein sequence, read N- to C-terminus: 14-3-3 protein 2 (254 aa).

The protein belongs to the 14-3-3 family. In terms of assembly, homodimer.

The chain is 14-3-3 protein 2 (TFT2) from Solanum lycopersicum (Tomato).